Consider the following 359-residue polypeptide: DNA polymerase IV (359 aa).

In terms of domain architecture, UmuC spans 4 to 185; that stretch reads IIHVDMDCFF…LALIKIPGVG (182 aa). Mg(2+)-binding residues include Asp8 and Asp103. The active site involves Glu104.

Belongs to the DNA polymerase type-Y family. As to quaternary structure, monomer. Mg(2+) is required as a cofactor.

The protein resides in the cytoplasm. The catalysed reaction is DNA(n) + a 2'-deoxyribonucleoside 5'-triphosphate = DNA(n+1) + diphosphate. Functionally, poorly processive, error-prone DNA polymerase involved in untargeted mutagenesis. Copies undamaged DNA at stalled replication forks, which arise in vivo from mismatched or misaligned primer ends. These misaligned primers can be extended by PolIV. Exhibits no 3'-5' exonuclease (proofreading) activity. May be involved in translesional synthesis, in conjunction with the beta clamp from PolIII. This chain is DNA polymerase IV, found in Shewanella loihica (strain ATCC BAA-1088 / PV-4).